A 236-amino-acid polypeptide reads, in one-letter code: Small ribosomal subunit protein uS2c (236 aa).

This sequence belongs to the universal ribosomal protein uS2 family.

The protein resides in the plastid. Its subcellular location is the chloroplast. The sequence is that of Small ribosomal subunit protein uS2c (rps2) from Oenothera parviflora (Small-flowered evening primrose).